We begin with the raw amino-acid sequence, 294 residues long: 2-dehydropantoate 2-reductase (294 aa).

NADP(+)-binding positions include 10–15, Arg34, Lys74, Asn98, and Ala122; that span reads GAGALG. Residue Lys178 is the Proton donor of the active site. Substrate-binding positions include Lys178, Asn182, Asn186, Asn196, and 243-246; that span reads NRSS. Glu258 contacts NADP(+).

This sequence belongs to the ketopantoate reductase family.

The protein localises to the cytoplasm. It catalyses the reaction (R)-pantoate + NAD(+) = 2-dehydropantoate + NADH + H(+). It carries out the reaction (R)-pantoate + NADP(+) = 2-dehydropantoate + NADPH + H(+). Its pathway is cofactor biosynthesis; coenzyme A biosynthesis. In terms of biological role, catalyzes the NAD(P)H-dependent reduction of ketopantoate into pantoic acid. The sequence is that of 2-dehydropantoate 2-reductase from Archaeoglobus fulgidus (strain ATCC 49558 / DSM 4304 / JCM 9628 / NBRC 100126 / VC-16).